We begin with the raw amino-acid sequence, 349 residues long: Probable transporter vicT (349 aa).

Positions 25–153 (IAAALLHALA…TALAGVVLVL (129 aa)) constitute an EamA domain. 9 helical membrane-spanning segments follow: residues 49–69 (PFTVLQIRLFITVLGCTAYLW), 89–109 (AAGGVFGACGFYLSISYLSLS), 111–131 (ATVLNFIAPLGAIMLTTYWEG), 133–153 (TFAFLDLIACITALAGVVLVL), 179–199 (LKGVVSGITGVAGGIVAFSAM), 215–235 (FGVSICIVTTAFSTIMPEVVW), 244–264 (LLAIIGILGLVMEYLLTAGLG), 269–289 (RVTIMIYSQVLWALFLDWAIW), and 294–314 (NVLTVLGSMVVVASLAVPYLF).

The protein belongs to the TPT transporter family. SLC35D subfamily.

It is found in the membrane. In terms of biological role, probable transporter; part of the gene cluster that mediates the biosynthesis of the secondary metabolite victorin, the molecular basis for Victoria blight of oats. This is Probable transporter vicT from Bipolaris victoriae (strain FI3) (Victoria blight of oats agent).